Consider the following 204-residue polypeptide: Photosystem I reaction center subunit II-2, chloroplastic (204 aa).

The N-terminal 44 residues, 1 to 44, are a transit peptide targeting the chloroplast; sequence MATQAAGIFSPAITTTTSAVKKLHLFSSSHRPKSLSFTKTAIRA. Residue Thr47 is modified to Phosphothreonine. The tract at residues 47–71 is disordered; that stretch reads TESSSAAPAVKEAPVGFTPPQLDPN. The tract at residues 137-145 is ferredoxin and ferredoxin-oxidoreductase binding; that stretch reads RLRSKYKIT.

It belongs to the PsaD family. Interacts with CURT1C.

Its subcellular location is the plastid. The protein resides in the chloroplast thylakoid membrane. In terms of biological role, PSAD can form complexes with ferredoxin and ferredoxin-oxidoreductase in photosystem I (PS I) reaction center. PSAD may encode the ferredoxin-docking protein. This is Photosystem I reaction center subunit II-2, chloroplastic (PSAD2) from Arabidopsis thaliana (Mouse-ear cress).